We begin with the raw amino-acid sequence, 158 residues long: MNVIEGVVATPDARVAIAIARFNHFINDSLLEGAIDALKRIGQVKDENITVVWVPGAYELPLTVRALTKSAKNGGYDAVIALGTVIRGGTAHFEFVAGECSSGLSSVAMDSEIPVAFGVLTTESIEQAIERAGTKAGNKGAEAALTALEMINVLKAIK.

5-amino-6-(D-ribitylamino)uracil-binding positions include F22, 57-59 (AYE), and 84-86 (TVI). 89–90 (GT) provides a ligand contact to (2S)-2-hydroxy-3-oxobutyl phosphate. The Proton donor role is filled by H92. F117 contacts 5-amino-6-(D-ribitylamino)uracil. R131 is a binding site for (2S)-2-hydroxy-3-oxobutyl phosphate.

This sequence belongs to the DMRL synthase family. In terms of assembly, forms an icosahedral capsid composed of 60 subunits, arranged as a dodecamer of pentamers.

The catalysed reaction is (2S)-2-hydroxy-3-oxobutyl phosphate + 5-amino-6-(D-ribitylamino)uracil = 6,7-dimethyl-8-(1-D-ribityl)lumazine + phosphate + 2 H2O + H(+). It participates in cofactor biosynthesis; riboflavin biosynthesis; riboflavin from 2-hydroxy-3-oxobutyl phosphate and 5-amino-6-(D-ribitylamino)uracil: step 1/2. Functionally, catalyzes the formation of 6,7-dimethyl-8-ribityllumazine by condensation of 5-amino-6-(D-ribitylamino)uracil with 3,4-dihydroxy-2-butanone 4-phosphate. This is the penultimate step in the biosynthesis of riboflavin. In Pectobacterium carotovorum subsp. carotovorum (strain PC1), this protein is 6,7-dimethyl-8-ribityllumazine synthase.